A 294-amino-acid polypeptide reads, in one-letter code: Nucleophosmin (294 aa).

Residues 121 to 133 (LEEEPESEDEEED) show a composition bias toward acidic residues. A disordered region spans residues 121–244 (LEEEPESEDE…PKTPKVPLSL (124 aa)). A Nuclear localization signal motif is present at residues 153–158 (PQKKPK). The segment covering 161–186 (EDDEDDDEDEDDDEDDEDDLDDDEEE) has biased composition (acidic residues). The Nuclear localization signal signature appears at 190 to 196 (PMKKPAR). Basic and acidic residues predominate over residues 223–233 (KTPDSKKDKSL).

Belongs to the nucleoplasmin family. In terms of assembly, decamer formed by two pentameric rings associated in a head-to-head fashion. In terms of processing, phosphorylated.

The protein localises to the cytoplasm. The protein resides in the nucleus. It is found in the nucleoplasm. Its subcellular location is the nucleolus. Acts as a chaperonin for the core histones H3, H2B and H4. Associated with nucleolar ribonucleoprotein structures and bind single-stranded nucleic acids. It may function in the assembly and/or transport of ribosome. May stimulate endonuclease activity on apurinic/apyrimidinic (AP) double-stranded DNA. May inhibit endonuclease activity on AP single-stranded RNA. In Gallus gallus (Chicken), this protein is Nucleophosmin (NPM1).